Here is a 1452-residue protein sequence, read N- to C-terminus: ABC multidrug transporter A-1 (1452 aa).

Residues methionine 1 to glutamate 20 are disordered. Residues asparagine 2, asparagine 10, asparagine 228, asparagine 287, and asparagine 311 are each glycosylated (N-linked (GlcNAc...) asparagine). The ABC transporter 1 domain maps to leucine 110–aspartate 363. A run of 6 helical transmembrane segments spans residues valine 474 to tyrosine 494, alanine 508 to leucine 528, methionine 554 to phenylalanine 574, glycine 583 to phenylalanine 603, valine 616 to proline 636, and isoleucine 725 to phenylalanine 745. The ABC transporter 2 domain occupies phenylalanine 802 to glycine 1044. Position 838 to 845 (glycine 838 to threonine 845) interacts with ATP. 6 helical membrane passes run alanine 1153–isoleucine 1173, isoleucine 1183–alanine 1203, phenylalanine 1223–phenylalanine 1243, leucine 1271–phenylalanine 1291, alanine 1297–threonine 1317, and phenylalanine 1324–valine 1344. Asparagine 1350, asparagine 1365, and asparagine 1391 each carry an N-linked (GlcNAc...) asparagine glycan. A helical transmembrane segment spans residues phenylalanine 1418–tryptophan 1438.

Belongs to the ABC transporter superfamily. ABCG family. PDR (TC 3.A.1.205) subfamily.

The protein localises to the membrane. ABC transporter that seems not to be involved in the efflux of toxic substances, at least not the classical compounds such as itraconazole, amphotericin B, voriconazole, posaconazole, ravuconazole, or echinocandins. This is ABC multidrug transporter A-1 from Aspergillus fumigatus (strain ATCC MYA-4609 / CBS 101355 / FGSC A1100 / Af293) (Neosartorya fumigata).